The sequence spans 616 residues: Proline dehydrogenase 1, mitochondrial (616 aa).

It belongs to the proline oxidase family. It depends on FAD as a cofactor.

It localises to the mitochondrion matrix. It carries out the reaction L-proline + a quinone = (S)-1-pyrroline-5-carboxylate + a quinol + H(+). It participates in amino-acid degradation; L-proline degradation into L-glutamate; L-glutamate from L-proline: step 1/2. In terms of biological role, converts proline to delta-1-pyrroline-5-carboxylate. Through proline catabolism, promotes reactive oxygen species (ROS) production and the transcription of skn-1 target genes in response to bacterial infection by P.aeruginosa. The polypeptide is Proline dehydrogenase 1, mitochondrial (Caenorhabditis elegans).